We begin with the raw amino-acid sequence, 197 residues long: dITP/XTP pyrophosphatase (197 aa).

Residue 8 to 13 (TGNPGK) participates in substrate binding. Residues Glu40 and Asp69 each contribute to the Mg(2+) site. The active-site Proton acceptor is Asp69. Substrate is bound by residues Ser70, 154 to 157 (FGYD), Lys177, and 182 to 183 (HR).

It belongs to the HAM1 NTPase family. In terms of assembly, homodimer. Mg(2+) serves as cofactor.

The enzyme catalyses XTP + H2O = XMP + diphosphate + H(+). It catalyses the reaction dITP + H2O = dIMP + diphosphate + H(+). The catalysed reaction is ITP + H2O = IMP + diphosphate + H(+). In terms of biological role, pyrophosphatase that catalyzes the hydrolysis of nucleoside triphosphates to their monophosphate derivatives, with a high preference for the non-canonical purine nucleotides XTP (xanthosine triphosphate), dITP (deoxyinosine triphosphate) and ITP. Seems to function as a house-cleaning enzyme that removes non-canonical purine nucleotides from the nucleotide pool, thus preventing their incorporation into DNA/RNA and avoiding chromosomal lesions. This Pectobacterium atrosepticum (strain SCRI 1043 / ATCC BAA-672) (Erwinia carotovora subsp. atroseptica) protein is dITP/XTP pyrophosphatase.